A 495-amino-acid chain; its full sequence is ATP synthase subunit beta (495 aa).

178–185 is an ATP binding site; it reads GGAGVGKT.

It belongs to the ATPase alpha/beta chains family. F-type ATPases have 2 components, CF(1) - the catalytic core - and CF(0) - the membrane proton channel. CF(1) has five subunits: alpha(3), beta(3), gamma(1), delta(1), epsilon(1). CF(0) has three main subunits: a(1), b(2) and c(9-12). The alpha and beta chains form an alternating ring which encloses part of the gamma chain. CF(1) is attached to CF(0) by a central stalk formed by the gamma and epsilon chains, while a peripheral stalk is formed by the delta and b chains.

It localises to the cell membrane. The catalysed reaction is ATP + H2O + 4 H(+)(in) = ADP + phosphate + 5 H(+)(out). Functionally, produces ATP from ADP in the presence of a proton gradient across the membrane. The catalytic sites are hosted primarily by the beta subunits. In Bifidobacterium animalis subsp. lactis (strain AD011), this protein is ATP synthase subunit beta.